Consider the following 154-residue polypeptide: PTS system glucose-specific EIIA component (154 aa).

The 105-residue stretch at 26–130 (DEVFKERMLG…SIKSPIIFTN (105 aa)) folds into the PTS EIIA type-1 domain. Histidine 63 and histidine 78 together coordinate Zn(2+). The active-site Tele-phosphohistidine intermediate; for EIIA activity is histidine 78. A Phosphohistidine; by HPr modification is found at histidine 78.

As to quaternary structure, heterodimer with glycerol kinase (glpk). Requires Zn(2+) as cofactor.

Its subcellular location is the cytoplasm. Functionally, the phosphoenolpyruvate-dependent sugar phosphotransferase system (sugar PTS), a major carbohydrate active transport system, catalyzes the phosphorylation of incoming sugar substrates concomitantly with their translocation across the cell membrane. The enzyme II complex composed of PtsG and Crr is involved in glucose transport. In Mycoplasma capricolum subsp. capricolum (strain California kid / ATCC 27343 / NCTC 10154), this protein is PTS system glucose-specific EIIA component (crr).